The following is a 130-amino-acid chain: Small ribosomal subunit protein uS8 (130 aa).

The protein belongs to the universal ribosomal protein uS8 family. As to quaternary structure, part of the 30S ribosomal subunit.

Functionally, one of the primary rRNA binding proteins, it binds directly to 16S rRNA central domain where it helps coordinate assembly of the platform of the 30S subunit. This is Small ribosomal subunit protein uS8 from Methanococcoides burtonii (strain DSM 6242 / NBRC 107633 / OCM 468 / ACE-M).